The primary structure comprises 508 residues: Maturase K (508 aa).

The protein belongs to the intron maturase 2 family. MatK subfamily.

The protein resides in the plastid. It localises to the chloroplast. In terms of biological role, usually encoded in the trnK tRNA gene intron. Probably assists in splicing its own and other chloroplast group II introns. This is Maturase K from Stewartia pseudocamellia (Japanese stewartia).